Consider the following 299-residue polypeptide: N-acetylaspartate synthetase (299 aa).

A compositionally biased stretch (pro residues) spans 44–57 (AAPGPAAAPPPAAG). The interval 44 to 70 (AAPGPAAAPPPAAGPQPHGGTGGAGPP) is disordered. Gly residues predominate over residues 60-70 (PHGGTGGAGPP). Residues 118 to 138 (YALLAALCFAVTRSLLLTCLV) form a helical membrane-spanning segment. The 138-residue stretch at 143–280 (LALRYYYSRK…VLPGMTLSLA (138 aa)) folds into the N-acetyltransferase domain.

This sequence belongs to the NAT8 family. As to expression, expressed in brain, kidney, liver and spleen. In brain, present in neurons but not in astrocytes (at protein level). Expressed in brain, thymus and spleen.

Its subcellular location is the cytoplasm. It is found in the microsome membrane. The protein resides in the mitochondrion membrane. It localises to the endoplasmic reticulum membrane. The enzyme catalyses L-aspartate + acetyl-CoA = N-acetyl-L-aspartate + CoA + H(+). Its activity is regulated as follows. Aminooxyacetic acid (AOAA) blocks its activity in both cytoplasm and mitochondria. Catalyzes the synthesis of N-acetylaspartate acid (NAA) from L-aspartate and acetyl-CoA. Promotes dopamine uptake by regulating TNF-alpha expression. Attenuates methamphetamine-induced inhibition of dopamine uptake. The chain is N-acetylaspartate synthetase (Nat8l) from Mus musculus (Mouse).